The sequence spans 177 residues: Large ribosomal subunit protein uL6 (177 aa).

The protein belongs to the universal ribosomal protein uL6 family. As to quaternary structure, part of the 50S ribosomal subunit.

In terms of biological role, this protein binds to the 23S rRNA, and is important in its secondary structure. It is located near the subunit interface in the base of the L7/L12 stalk, and near the tRNA binding site of the peptidyltransferase center. In Thioalkalivibrio sulfidiphilus (strain HL-EbGR7), this protein is Large ribosomal subunit protein uL6.